Here is a 339-residue protein sequence, read N- to C-terminus: NADH-quinone oxidoreductase subunit H (339 aa).

9 helical membrane-spanning segments follow: residues 9–29, 50–70, 82–102, 115–135, 161–181, 187–207, 235–255, 275–295, and 311–331; these read IFPL…LILC, PNVV…KLLF, ILFI…WAVI, VGVL…IIAG, MGLV…SEII, IPWW…ISVL, MGFA…SAMT, IPGF…FLWI, and GWKV…SVLV.

This sequence belongs to the complex I subunit 1 family. NDH-1 is composed of 14 different subunits. Subunits NuoA, H, J, K, L, M, N constitute the membrane sector of the complex.

The protein localises to the cell inner membrane. The catalysed reaction is a quinone + NADH + 5 H(+)(in) = a quinol + NAD(+) + 4 H(+)(out). NDH-1 shuttles electrons from NADH, via FMN and iron-sulfur (Fe-S) centers, to quinones in the respiratory chain. The immediate electron acceptor for the enzyme in this species is believed to be ubiquinone. Couples the redox reaction to proton translocation (for every two electrons transferred, four hydrogen ions are translocated across the cytoplasmic membrane), and thus conserves the redox energy in a proton gradient. This subunit may bind ubiquinone. The sequence is that of NADH-quinone oxidoreductase subunit H from Rickettsia rickettsii (strain Iowa).